The following is a 214-amino-acid chain: Large ribosomal subunit protein uL3 (214 aa).

The disordered stretch occupies residues 129–157 (FGRGPMSHGSKNHRRPGSIGAGTTPGRVF).

This sequence belongs to the universal ribosomal protein uL3 family. In terms of assembly, part of the 50S ribosomal subunit. Forms a cluster with proteins L14 and L19.

Its function is as follows. One of the primary rRNA binding proteins, it binds directly near the 3'-end of the 23S rRNA, where it nucleates assembly of the 50S subunit. This is Large ribosomal subunit protein uL3 from Synechococcus sp. (strain JA-2-3B'a(2-13)) (Cyanobacteria bacterium Yellowstone B-Prime).